Reading from the N-terminus, the 385-residue chain is Beta-lactamase (385 aa).

The signal sequence occupies residues M1–V20. S84 acts as the Acyl-ester intermediate in catalysis. Y170 functions as the Proton acceptor in the catalytic mechanism. K335 to G337 provides a ligand contact to substrate.

Belongs to the class-C beta-lactamase family.

Its subcellular location is the periplasm. It catalyses the reaction a beta-lactam + H2O = a substituted beta-amino acid. This protein is a serine beta-lactamase with a substrate specificity for cephalosporins. The polypeptide is Beta-lactamase (Lysobacter lactamgenus).